The sequence spans 607 residues: 2-isopropylmalate synthase (607 aa).

The segment covering methionine 1–glutamine 10 has biased composition (polar residues). The tract at residues methionine 1–arginine 40 is disordered. In terms of domain architecture, Pyruvate carboxyltransferase spans proline 75 to aspartate 349. Mg(2+)-binding residues include aspartate 84, histidine 288, histidine 290, and asparagine 324. The segment at proline 491–arginine 607 is regulatory domain.

The protein belongs to the alpha-IPM synthase/homocitrate synthase family. LeuA type 2 subfamily. As to quaternary structure, homodimer. Mg(2+) is required as a cofactor.

The protein resides in the cytoplasm. The enzyme catalyses 3-methyl-2-oxobutanoate + acetyl-CoA + H2O = (2S)-2-isopropylmalate + CoA + H(+). The protein operates within amino-acid biosynthesis; L-leucine biosynthesis; L-leucine from 3-methyl-2-oxobutanoate: step 1/4. In terms of biological role, catalyzes the condensation of the acetyl group of acetyl-CoA with 3-methyl-2-oxobutanoate (2-ketoisovalerate) to form 3-carboxy-3-hydroxy-4-methylpentanoate (2-isopropylmalate). In Mycobacterium leprae (strain TN), this protein is 2-isopropylmalate synthase.